Here is a 545-residue protein sequence, read N- to C-terminus: MAAKEVVFGNDARVRMLAGVNILANAVKVTLGPKGRNVVLDKSFGSPLITKDGVSVAKEIELEDKFENMGAQMVKEVASKANDAAGDGTTTATVLAQAIVVEGLKAVAAGMNPMDLKRGIDKAVIAAVAELKALSQPCADSKAIAQVATISANSDESIGEIIATAMEKVGKEGVITVEEGQALENELDVVEGMQFDRGYLSPYFINKPETGSVELDHPFVLLVDKKISNIRELLPILEGLAKTGKPLLIVAEDVEGEALATLVVNNMRGIVKVAAVKAPGFGDRRKAMLQDVAILTGGTVIAEEIGLELEKATLEDLGTAKRVVITKDNTTIIDGNGEQTQIAARVSQIKQQVEESTSDYDKEKLQERMAKLAGGVAVIKVGAATEVEMKEKKARVEDALHATRAAVEEGVVPGGGVALVRVASKIAEVEVLNEDQKHGVVIALRAMEAPLRQIATNAGEEASVVANTVKNGSGNFGYNAGNDTYGDMLEMGILDPTKVTRCALQFAASIAGLMITTEAMVAEIPQNASQDMGGMGGMGGMGGMM.

ATP is bound by residues 30 to 33 (TLGP), K51, 87 to 91 (DGTTT), G415, and D495.

It belongs to the chaperonin (HSP60) family. In terms of assembly, forms a cylinder of 14 subunits composed of two heptameric rings stacked back-to-back. Interacts with the co-chaperonin GroES.

Its subcellular location is the cytoplasm. The enzyme catalyses ATP + H2O + a folded polypeptide = ADP + phosphate + an unfolded polypeptide.. In terms of biological role, together with its co-chaperonin GroES, plays an essential role in assisting protein folding. The GroEL-GroES system forms a nano-cage that allows encapsulation of the non-native substrate proteins and provides a physical environment optimized to promote and accelerate protein folding. The chain is Chaperonin GroEL from Shewanella baltica (strain OS155 / ATCC BAA-1091).